The chain runs to 118 residues: uncharacterized protein (118 aa).

This is an uncharacterized protein from Haemophilus influenzae (strain ATCC 51907 / DSM 11121 / KW20 / Rd).